The primary structure comprises 219 residues: Envelope protein US9 homolog (219 aa).

Residues 1 to 193 (MEKAEAAAVV…RHRRRRVALT (193 aa)) are Intravirion-facing. Positions 145-146 (LL) match the Di-leucine internalization motif motif. Residues 153–168 (DYDSESGCYYSESDNE) are acidic. 2 positions are modified to phosphoserine; by host CK2: Ser-163 and Ser-165. Residues 194-214 (VAGVILVVVLCAISGIVGAFL) traverse the membrane as a helical; Signal-anchor for type II membrane protein segment. Topologically, residues 215–219 (ARVFP) are virion surface.

Belongs to the alphaherpesvirinae envelope protein US9 family. Post-translationally, phosphorylated on serines within the acidic cluster. Phosphorylation determines whether endocytosed viral US9 traffics to the trans-Golgi network or recycles to the cell membrane.

Its subcellular location is the virion membrane. The protein resides in the host Golgi apparatus membrane. It localises to the host smooth endoplasmic reticulum membrane. The protein localises to the host cell membrane. In terms of biological role, essential for the anterograde spread of the infection throughout the host nervous system. Together with the gE/gI heterodimer, US9 is involved in the sorting and transport of viral structural components toward axon tips. The chain is Envelope protein US9 homolog from Equine herpesvirus 1 (strain Ab4p) (EHV-1).